Reading from the N-terminus, the 316-residue chain is Probable porphobilinogen deaminase (316 aa).

Cysteine 234 is modified (S-(dipyrrolylmethanemethyl)cysteine).

Belongs to the HMBS family. Dipyrromethane serves as cofactor.

The enzyme catalyses 4 porphobilinogen + H2O = hydroxymethylbilane + 4 NH4(+). Its pathway is porphyrin-containing compound metabolism; protoporphyrin-IX biosynthesis; coproporphyrinogen-III from 5-aminolevulinate: step 2/4. Functionally, tetrapolymerization of the monopyrrole PBG into the hydroxymethylbilane pre-uroporphyrinogen in several discrete steps. The sequence is that of Probable porphobilinogen deaminase from Methanosarcina mazei (strain ATCC BAA-159 / DSM 3647 / Goe1 / Go1 / JCM 11833 / OCM 88) (Methanosarcina frisia).